Here is a 313-residue protein sequence, read N- to C-terminus: Nematocyst expressed protein 8 (313 aa).

Residues 1–19 form the signal peptide; the sequence is MLRRPLLLVLFTVFSTLYA. The tract at residues 24–56 is disordered; it reads GVSPPTNESEAEVSPGDDEGPPEPGNEPDVNWR. The span at 32–44 shows a compositional bias: acidic residues; sequence SEAEVSPGDDEGP. ShKT domains are found at residues 65 to 99, 109 to 145, and 151 to 186; these read CKDK…CRFC, CKDL…CELC, and FKYT…CRKY. Cystine bridges form between cysteine 65–cysteine 99, cysteine 72–cysteine 92, cysteine 81–cysteine 96, cysteine 109–cysteine 145, cysteine 127–cysteine 142, cysteine 160–cysteine 179, and cysteine 169–cysteine 183. A compositionally biased stretch (low complexity) spans 222–244; the sequence is TAAPSTQPAETTKAPPNTAAPTA. Residues 222-313 form a disordered region; that stretch reads TAAPSTQPAE…LCDEKHSSQQ (92 aa). Residues 245-265 are compositionally biased toward pro residues; that stretch reads APTPAPTPAPAPAPTPAPVAP. Residues 280 to 297 show a composition bias toward acidic residues; the sequence is TPEEQDDNSADESTEIEA.

The protein belongs to the NEP3 family. Nematocytes. In late planulae, is only expressed in a handful of nematocytes in the lower pharynx. Is absent from the tentacles and outer body wall.

It localises to the nematocyst. It is found in the secreted. In terms of biological role, probable toxin probably only used for predation. The protein is Nematocyst expressed protein 8 of Nematostella vectensis (Starlet sea anemone).